A 381-amino-acid polypeptide reads, in one-letter code: MAEQPIRYEFIKECKQTGARLGRVHTPHGSFETPVFMPVGTLATVKTMSPDELKSMDAGIILSNTYHLWLRPGHDIVKEAGGLHKFMNWDRAILTDSGGFQVFSLSKFRNIEEEGVHFRNHLNGDKLFLSPEKAMEIQNALGSDIMMAFDECPPYPAEYDYMKRSVERTSRWAERCLEAHGRSDEQGLFGIVQGGEYEDLRTQSAKDLVSLDFPGYAIGGLSVGEPKHVMNRVLEFTTPLLPKDKPRYLMGVGSPDALIDGAIRGVDMFDCVLPTRIARNGTVFTNEGRLNMKNAKYERDFRPIDEECSCHTCKNYSRAYIRHLIRCNETFGIRLTTYHNLHFLLHLMEQVRQAIREDRLGDFREEFFERYGYNKPNAKSF.

The active-site Proton acceptor is D96. Residues 96–100, D150, Q193, and G220 contribute to the substrate site; that span reads DSGGF. The segment at 251–257 is RNA binding; that stretch reads GVGSPDA. The Nucleophile role is filled by D270. Residues 275 to 279 form an RNA binding; important for wobble base 34 recognition region; sequence TRIAR. Residues C308, C310, C313, and H339 each contribute to the Zn(2+) site.

This sequence belongs to the queuine tRNA-ribosyltransferase family. Homodimer. Within each dimer, one monomer is responsible for RNA recognition and catalysis, while the other monomer binds to the replacement base PreQ1. Zn(2+) serves as cofactor.

The enzyme catalyses 7-aminomethyl-7-carbaguanine + guanosine(34) in tRNA = 7-aminomethyl-7-carbaguanosine(34) in tRNA + guanine. It participates in tRNA modification; tRNA-queuosine biosynthesis. Catalyzes the base-exchange of a guanine (G) residue with the queuine precursor 7-aminomethyl-7-deazaguanine (PreQ1) at position 34 (anticodon wobble position) in tRNAs with GU(N) anticodons (tRNA-Asp, -Asn, -His and -Tyr). Catalysis occurs through a double-displacement mechanism. The nucleophile active site attacks the C1' of nucleotide 34 to detach the guanine base from the RNA, forming a covalent enzyme-RNA intermediate. The proton acceptor active site deprotonates the incoming PreQ1, allowing a nucleophilic attack on the C1' of the ribose to form the product. After dissociation, two additional enzymatic reactions on the tRNA convert PreQ1 to queuine (Q), resulting in the hypermodified nucleoside queuosine (7-(((4,5-cis-dihydroxy-2-cyclopenten-1-yl)amino)methyl)-7-deazaguanosine). This is Queuine tRNA-ribosyltransferase from Bacillus velezensis (strain DSM 23117 / BGSC 10A6 / LMG 26770 / FZB42) (Bacillus amyloliquefaciens subsp. plantarum).